Consider the following 49-residue polypeptide: Protein YdfW (49 aa).

Residues 16–49 (PKADHPWLTRRTQSHQQVKPPKLPKKKPDPDKKD) are disordered.

May be involved in H(2) production during fermentative growth. The protein is Protein YdfW (ydfW) of Escherichia coli (strain K12).